A 322-amino-acid chain; its full sequence is Solute carrier family 35 member B1 (322 aa).

Transmembrane regions (helical) follow at residues 12–32 (LRLPLCFLGVFVCYFYYGILQ), 51–71 (FALTLVFIQCVINAMFAKILI), 85–105 (WLYAACSVSYVGAMVSSNSAL), 136–156 (YPLAKYLCVLLIVAGVALFMY), 168–188 (TVGFGELLLLLSLTLDGLTGV), 210–230 (LWSTVLLGAGILFTGELWEFL), 243–263 (ILLFGLTSALGQSFIFMTVVY), and 285–305 (VILFANPISSMQWVGTVLVFL). Residues 318 to 322 (KKTSH) carry the Di-lysine motif motif.

The protein belongs to the nucleotide-sugar transporter family. SLC35B subfamily.

The protein resides in the endoplasmic reticulum membrane. It carries out the reaction ADP(in) + ATP(out) = ADP(out) + ATP(in). It catalyses the reaction UDP(out) + ATP(in) = UDP(in) + ATP(out). The enzyme catalyses UTP(out) + ATP(in) = UTP(in) + ATP(out). The catalysed reaction is dATP(out) + ATP(in) = dATP(in) + ATP(out). Its function is as follows. ATP:ADP antiporter that catalyzes the exchange of ATP and ADP across the endoplasmic reticulum (ER) membrane. Imports ATP from the cytosol to the ER lumen and exports ADP in the opposite direction. Regulates ER energy metabolism and protein biogenesis. Appears to be part of a calcium-dependent ER to cytosol low energy response axis, where calcium efflux from ER to the cytosol triggers ATP import into the ER lumen to maintain sufficient ATP supply. Provides ATP to ER chaperone HSPA5 that drives protein folding and trafficking in the ER. Can transport dATP, UTP or UDP in exchange for ATP, but the physiological relevance of this process remains to be established. The protein is Solute carrier family 35 member B1 (Slc35b1) of Rattus norvegicus (Rat).